The sequence spans 134 residues: Cytochrome b (134 aa).

A run of 3 helical transmembrane segments spans residues 33 to 53, 77 to 98, and 113 to 133; these read FGSL…FLAI, WLLR…YLHV, and WNIG…GYVL. Residues His-83 and His-97 each coordinate heme b.

Belongs to the cytochrome b family. In terms of assembly, the cytochrome bc1 complex contains 11 subunits: 3 respiratory subunits (MT-CYB, CYC1 and UQCRFS1), 2 core proteins (UQCRC1 and UQCRC2) and 6 low-molecular weight proteins (UQCRH/QCR6, UQCRB/QCR7, UQCRQ/QCR8, UQCR10/QCR9, UQCR11/QCR10 and a cleavage product of UQCRFS1). This cytochrome bc1 complex then forms a dimer. Heme b is required as a cofactor.

The protein localises to the mitochondrion inner membrane. Functionally, component of the ubiquinol-cytochrome c reductase complex (complex III or cytochrome b-c1 complex) that is part of the mitochondrial respiratory chain. The b-c1 complex mediates electron transfer from ubiquinol to cytochrome c. Contributes to the generation of a proton gradient across the mitochondrial membrane that is then used for ATP synthesis. The chain is Cytochrome b (MT-CYB) from Platyrrhinus helleri (Heller's broad-nosed bat).